A 399-amino-acid polypeptide reads, in one-letter code: Phosphopentomutase (399 aa).

Mn(2+)-binding residues include Asp10, Asp296, His301, Asp337, His338, and His349.

This sequence belongs to the phosphopentomutase family. Requires Mn(2+) as cofactor.

Its subcellular location is the cytoplasm. The enzyme catalyses 2-deoxy-alpha-D-ribose 1-phosphate = 2-deoxy-D-ribose 5-phosphate. It catalyses the reaction alpha-D-ribose 1-phosphate = D-ribose 5-phosphate. Its pathway is carbohydrate degradation; 2-deoxy-D-ribose 1-phosphate degradation; D-glyceraldehyde 3-phosphate and acetaldehyde from 2-deoxy-alpha-D-ribose 1-phosphate: step 1/2. In terms of biological role, isomerase that catalyzes the conversion of deoxy-ribose 1-phosphate (dRib-1-P) and ribose 1-phosphate (Rib-1-P) to deoxy-ribose 5-phosphate (dRib-5-P) and ribose 5-phosphate (Rib-5-P), respectively. This chain is Phosphopentomutase, found in Idiomarina loihiensis (strain ATCC BAA-735 / DSM 15497 / L2-TR).